A 944-amino-acid polypeptide reads, in one-letter code: 2-oxoglutarate dehydrogenase E1 component (944 aa).

The segment at 918–944 (SSTAEGDPTVHKKEQERIVSDSLTRKN) is disordered. Residues 925–936 (PTVHKKEQERIV) are compositionally biased toward basic and acidic residues.

It belongs to the alpha-ketoglutarate dehydrogenase family. Homodimer. Part of the 2-oxoglutarate dehydrogenase (OGDH) complex composed of E1 (2-oxoglutarate dehydrogenase), E2 (dihydrolipoamide succinyltransferase) and E3 (dihydrolipoamide dehydrogenase); the complex contains multiple copies of the three enzymatic components (E1, E2 and E3). The cofactor is thiamine diphosphate.

The enzyme catalyses N(6)-[(R)-lipoyl]-L-lysyl-[protein] + 2-oxoglutarate + H(+) = N(6)-[(R)-S(8)-succinyldihydrolipoyl]-L-lysyl-[protein] + CO2. In terms of biological role, E1 component of the 2-oxoglutarate dehydrogenase (OGDH) complex which catalyzes the decarboxylation of 2-oxoglutarate, the first step in the conversion of 2-oxoglutarate to succinyl-CoA and CO(2). The sequence is that of 2-oxoglutarate dehydrogenase E1 component from Bacillus pumilus (strain SAFR-032).